The chain runs to 441 residues: Maltose-6'-phosphate glucosidase (441 aa).

An NAD(+)-binding site is contributed by phenylalanine 4–asparagine 70. Substrate contacts are provided by arginine 93 and asparagine 147. Residue cysteine 169 coordinates Mn(2+). Residue aspartate 170 is the Proton donor of the active site. Histidine 200 is a binding site for Mn(2+). The Proton acceptor role is filled by tyrosine 264. Arginine 284 serves as a coordination point for substrate.

This sequence belongs to the glycosyl hydrolase 4 family. As to quaternary structure, homotetramer. It depends on NAD(+) as a cofactor. Requires Mn(2+) as cofactor. The cofactor is Fe(2+). Co(2+) serves as cofactor. Ni(2+) is required as a cofactor.

It catalyses the reaction alpha-maltose 6'-phosphate + H2O = D-glucose 6-phosphate + D-glucose. The protein operates within glycan degradation; maltose degradation. Hydrolyzes a wide variety of 6-phospho-alpha-D-glucosides including maltose-6'P, trehalose-6P and the 6'-phosphorylated derivatives of the five linkage-isomeric alpha-D-glucosyl-D-fructoses: trehalulose-6'P, turanose-6'P, maltulose-6'P, leucrose-6'P, and palatinose-6'P. However, sucrose-6P is not a substrate for MalH, and this enzyme also fails to hydrolyze beta-O-linked phosphorylated disaccharides such as cellobiose-6'P and gentobiose-6'P. This Fusobacterium mortiferum protein is Maltose-6'-phosphate glucosidase (malH).